The primary structure comprises 1166 residues: Calcium-activated potassium channel subunit alpha-1 (1166 aa).

Positions 1–15 (MANGGGGGGGGGGGS) are enriched in gly residues. 2 disordered regions span residues 1 to 20 (MANG…LRMS) and 30 to 51 (LDAS…SVHE). Residues 1-74 (MANGGGGGGG…VPCDSRGQRM (74 aa)) lie on the Extracellular side of the membrane. The segment covering 33–48 (SSSSSSSSSSSSSSSS) has biased composition (low complexity). Residues 75-95 (WWAFLASSMVTFFGGLFIILL) traverse the membrane as a helical segment. At 96–166 (WRTLKYLWTV…MISAQTLTGR (71 aa)) the chain is on the cytoplasmic side. S-palmitoyl cysteine attachment occurs at residues cysteine 106, cysteine 107, and cysteine 109. At threonine 139 the chain carries Phosphothreonine; by CamK2. Residues 167 to 187 (VLVVLVFALSIGALVIYFIDS) traverse the membrane as a helical segment. Residues 188-202 (SNPIESCQNFYKDFT) lie on the Extracellular side of the membrane. Residues 203 to 223 (LQIDMAFNVFFLLYFGLRFIA) form a helical membrane-spanning segment. Over 224 to 227 (ANDK) the chain is Cytoplasmic. Residues 228 to 248 (LWFWLEVNSVVDFFTVPPVFV) form a helical membrane-spanning segment. Residues 249 to 252 (SVYL) lie on the Extracellular side of the membrane. A helical; Voltage-sensor membrane pass occupies residues 253-273 (NRSWLGLRFLRALRLIQFSEI). At 274-288 (LQFLNILKTSNSIKL) the chain is on the cytoplasmic side. A helical transmembrane segment spans residues 289–309 (VNLLSIFISTWLTAAGFIHLV). Residues 310–323 (ENSGDPWENFQNNQ) are Extracellular-facing. The segment at residues 324 to 346 (ALTYWECVYLLMVTMSTVGYGDV) is an intramembrane region (pore-forming). The Selectivity for potassium signature appears at 340 to 343 (TVGY). At 347 to 355 (YAKTTLGRL) the chain is on the extracellular side. Residues 356–376 (FMVFFILGGLAMFASYVPEII) traverse the membrane as a helical segment. Residues 377–1166 (ELIGNRKKYG…KQKYVQEERL (790 aa)) are Cytoplasmic-facing. One can recognise an RCK N-terminal 1 domain in the interval 395 to 537 (RKHIVVCGHI…WNWKEGDDAI (143 aa)). Glutamate 427, glutamine 450, and glutamate 452 together coordinate Mg(2+). Residues 544–564 (LGFIAQSCLAQGLSTMLANLF) form a segment S7 region. The interval 601–621 (LSFPTVCELCFVKLKLLMIAI) is segment S8. The interval 665–669 (CKACH) is heme-binding motif. The tract at residues 689–717 (EQPSTLSPKKKQRNGGMRNSPSSSPKLMR) is disordered. The residue at position 693 (threonine 693) is a Phosphothreonine. Phosphoserine occurs at positions 695, 708, and 712. The tract at residues 767–787 (VLSGHVVVCIFGDVSSALIGL) is segment S9. The 145-residue stretch at 769 to 913 (SGHVVVCIFG…MDRSSPDNSP (145 aa)) folds into the RCK N-terminal 2 domain. The residue at position 900 (threonine 900) is a Phosphothreonine. 2 positions are modified to phosphoserine: serine 908 and serine 912. The Calcium bowl signature appears at 933–955 (TELVNDTNVQFLDQDDDDDPDTE). Ca(2+)-binding residues include glutamine 942, aspartate 945, aspartate 948, and aspartate 950. Positions 962–982 (FACGTAFAVSVLDSLMSATYF) are segment S10. Positions 1116-1141 (RASLSHSSHSSQSSSKKSSSVHSIPS) are enriched in low complexity. Residues 1116–1166 (RASLSHSSHSSQSSSKKSSSVHSIPSTANRQNRPKSRESRDKQKYVQEERL) form a disordered region. Residues 1150 to 1166 (KSRESRDKQKYVQEERL) are compositionally biased toward basic and acidic residues. A phosphoserine; by PKG mark is found at serine 1151 and serine 1154.

It belongs to the potassium channel family. Calcium-activated (TC 1.A.1.3) subfamily. KCa1.1/KCNMA1 sub-subfamily. Homotetramer; which constitutes the calcium-activated potassium channel. Interacts with beta subunits KCNMB1, KCNMB2, KCNMB3 and KCNMB4. Interacts with gamma subunits LRRC26, LRRC38, LRRC52 and LRRC55. Beta and gamma subunits are accessory, and modulate its activity. Interacts with RAB11B. Post-translationally, phosphorylated. Stimulated by PKG, but not by PKA. In smooth muscles, phosphorylation affects its activity. In terms of processing, phosphorylated. Exclusively stimulated by PKA. In smooth muscles, phosphorylation affects its activity. Incremental phosphorylation of Thr-139 of the KCNMA1 tetramer changes the response to ethanol from increased activation to inhibition of channel activity. Post-translationally, palmitoylation by ZDHHC22 and ZDHHC23 within the intracellular linker between the S0 and S1 transmembrane domains regulates localization to the plasma membrane. Depalmitoylated by LYPLA1 and LYPLAL1, leading to retard exit from the trans-Golgi network.

The protein resides in the cell membrane. The enzyme catalyses K(+)(in) = K(+)(out). With respect to regulation, ethanol and carbon monoxide-bound heme increase channel activation. Heme inhibits channel activation. Phosphorylation of Thr-139 leads to inhibition of channel activity by ethanol. In terms of biological role, potassium channel activated by both membrane depolarization or increase in cytosolic Ca(2+) that mediates export of K(+). It is also activated by concentration of cytosolic Mg(2+). Its activation dampens the excitatory events that elevate the cytosolic Ca(2+) concentration and/or depolarize the cell membrane. It therefore contributes to repolarization of the membrane potential. Plays a key role in controlling excitability in a number of systems, such as regulation of the contraction of smooth muscle, the tuning of hair cells in the cochlea, regulation of transmitter release, and innate immunity. In smooth muscles, its activation by high level of Ca(2+), caused by ryanodine receptors in the sarcoplasmic reticulum, regulates the membrane potential. In cochlea cells, its number and kinetic properties partly determine the characteristic frequency of each hair cell and thereby helps to establish a tonotopic map. Kinetics of KCNMA1 channels are determined by alternative splicing, phosphorylation status and its combination with modulating beta subunits. Highly sensitive to both iberiotoxin (IbTx) and charybdotoxin (CTX). This Bos taurus (Bovine) protein is Calcium-activated potassium channel subunit alpha-1 (KCNMA1).